We begin with the raw amino-acid sequence, 204 residues long: Large ribosomal subunit protein eL15 (204 aa).

The protein belongs to the eukaryotic ribosomal protein eL15 family. In terms of assembly, component of the large ribosomal subunit.

It is found in the cytoplasm. Component of the large ribosomal subunit. The ribosome is a large ribonucleoprotein complex responsible for the synthesis of proteins in the cell. In Carassius auratus (Goldfish), this protein is Large ribosomal subunit protein eL15 (rpl15).